Reading from the N-terminus, the 345-residue chain is N-acetyl-gamma-glutamyl-phosphate reductase (345 aa).

Cys149 is an active-site residue.

The protein belongs to the NAGSA dehydrogenase family. Type 1 subfamily.

The protein resides in the cytoplasm. It carries out the reaction N-acetyl-L-glutamate 5-semialdehyde + phosphate + NADP(+) = N-acetyl-L-glutamyl 5-phosphate + NADPH + H(+). It participates in amino-acid biosynthesis; L-arginine biosynthesis; N(2)-acetyl-L-ornithine from L-glutamate: step 3/4. Functionally, catalyzes the NADPH-dependent reduction of N-acetyl-5-glutamyl phosphate to yield N-acetyl-L-glutamate 5-semialdehyde. In Bacillus cereus (strain AH187), this protein is N-acetyl-gamma-glutamyl-phosphate reductase.